A 1163-amino-acid chain; its full sequence is NACHT, LRR and PYD domains-containing protein 5 (1163 aa).

3 stretches are compositionally biased toward basic and acidic residues: residues 1–42 (MGPP…KDQG), 56–94 (PEKE…KDQG), and 108–127 (PEKD…EQKS). The segment at 1 to 201 (MGPPEKESKA…TEADKDNGGD (201 aa)) is disordered. The span at 128-137 (ESTMSPSENV) shows a compositional bias: polar residues. Residues 153–173 (ASERKMTSPENDSKSIQKDQG) are compositionally biased toward basic and acidic residues. An NACHT domain is found at 243–565 (HTIILHGRPG…AALYYVLEGL (323 aa)). 249–256 (GRPGVGKS) is a binding site for ATP. LRR repeat units lie at residues 801-822 (NLKY…LACE), 830-851 (SVET…MIST), 858-878 (RLKC…ISLG), 887-906 (LLQK…CHLL), 915-935 (NLTH…QQLC), 944-964 (ALQR…GFLA), 972-993 (KLTH…LLCE), 1001-1022 (YLQE…DLAC), 1029-1050 (HLKS…TLCE), 1058-1079 (SLRR…ALSL), and 1086-1107 (HLNS…KLCS).

The protein belongs to the NLRP family. Component of the subcortical maternal complex (SCMC), at least composed of NLRP5, KHDC3, OOEP, and TLE6. Within the complex, interacts with OOEP, KHDC3 and TLE6. The SCMC may facilitate translocation of its components between the nuclear and cytoplasmic compartments. As part of the SCMC interacts with the SCMC-associated protein ZBED3. As part of the SCMC interacts with the SCMC-associated protein CFL1/Cofilin-1. Interacts with PRKCE. Interacts with TUBB3 at cytoskeleton microtubules. In terms of processing, phosphorylated by PRKCE.

The protein resides in the cytoplasm. It localises to the cytoplasmic vesicle. Its subcellular location is the secretory vesicle. The protein localises to the cortical granule. It is found in the mitochondrion. The protein resides in the nucleus. It localises to the nucleolus. Its subcellular location is the golgi apparatus. Its function is as follows. Component of the subcortical maternal complex (SCMC), a multiprotein complex that plays a key role in early embryonic development. The SCMC complex is a structural constituent of cytoplasmic lattices, which consist in fibrous structures found in the cytoplasm of oocytes and preimplantation embryos. They are required to store maternal proteins critical for embryonic development, such as proteins that control epigenetic reprogramming of the preimplantation embryo, and prevent their degradation or activation. Required for the localization of cortical granules to the cortex of oocytes, via association with the cortical actin scaffold. Required for cortical actin clearance prior to oocyte exocytosis and prevention of polyspermy. Involved in regulating post-fertilization Ca(2+) release and endoplasmic reticulum storage (ER) storage via regulation of cellular localization. May be involved in the localization of mitochondria to the cytoplasm and perinuclear region in oocytes and early stage embryos, independent of its role in CPL formation. In Mus musculus (Mouse), this protein is NACHT, LRR and PYD domains-containing protein 5.